Here is a 55-residue protein sequence, read N- to C-terminus: Sec-independent protein translocase protein TatA (55 aa).

The helical transmembrane segment at 1–21 (MFGELGVPEVLFILGIALLIF) threads the bilayer.

The protein belongs to the TatA/E family. As to quaternary structure, forms a complex with TatC.

It localises to the cell inner membrane. In terms of biological role, part of the twin-arginine translocation (Tat) system that transports large folded proteins containing a characteristic twin-arginine motif in their signal peptide across membranes. TatA could form the protein-conducting channel of the Tat system. The polypeptide is Sec-independent protein translocase protein TatA (Koribacter versatilis (strain Ellin345)).